We begin with the raw amino-acid sequence, 103 residues long: Toxin BMLCL (103 aa).

A signal peptide spans 1–21 (MKTLLLTLVVVTIICLDLGYT). Disulfide bonds link cysteine 24-cysteine 45, cysteine 27-cysteine 37, cysteine 38-cysteine 72, cysteine 76-cysteine 90, and cysteine 91-cysteine 96.

It belongs to the three-finger toxin family. Ancestral subfamily. Orphan group XVII sub-subfamily. As to expression, expressed by the venom gland.

The protein localises to the secreted. Interacts with high efficiency with both neuronal alpha-7/CHRNA7 and muscle type nicotinic acetylcholine receptors (nAChRs). Tested on human alpha-7/CHRNA7 nAChR (IC(50)=42 nM), T.californica muscle receptor (IC(50)=31 nM), L.stagnalis and A.californica acetylcholine-binding proteins (IC(50)=333 nM and 3.4 uM, respectively). The chain is Toxin BMLCL from Bungarus multicinctus (Many-banded krait).